Here is a 345-residue protein sequence, read N- to C-terminus: Putative mediator of RNA polymerase II transcription subunit 7 (345 aa).

Low complexity-rich tracts occupy residues 1–27 (MNTS…TPQQ) and 88–126 (NNNN…NNNN). Disordered stretches follow at residues 1–130 (MNTS…KATT) and 292–315 (TPLP…NNSQ).

It belongs to the Mediator complex subunit 7 family. In terms of assembly, component of the Mediator complex.

Its subcellular location is the nucleus. Its function is as follows. Component of the Mediator complex, a coactivator involved in the regulated transcription of nearly all RNA polymerase II-dependent genes. Mediator functions as a bridge to convey information from gene-specific regulatory proteins to the basal RNA polymerase II transcription machinery. Mediator is recruited to promoters by direct interactions with regulatory proteins and serves as a scaffold for the assembly of a functional preinitiation complex with RNA polymerase II and the general transcription factors. The protein is Putative mediator of RNA polymerase II transcription subunit 7 (med7) of Dictyostelium discoideum (Social amoeba).